A 65-amino-acid chain; its full sequence is Putative antitoxin VapB7 (65 aa).

The protein belongs to the UPF0165 family.

Possibly the antitoxin component of a type II toxin-antitoxin (TA) system. Its cognate toxin is VapC7 (Potential). The sequence is that of Putative antitoxin VapB7 (vapB7) from Archaeoglobus fulgidus (strain ATCC 49558 / DSM 4304 / JCM 9628 / NBRC 100126 / VC-16).